A 1272-amino-acid chain; its full sequence is Vitamin B12-dependent ribonucleotide reductase (1272 aa).

Substrate-binding positions include Ser153, Ala198 to Cys199, Gly230, Asn474 to Glu478, and Pro675 to Ile679. A disulfide bond links Cys199 and Cys487. The active-site Proton acceptor is Asn474. Cys476 acts as the Cysteine radical intermediate in catalysis. Catalysis depends on Glu478, which acts as the Proton acceptor. The segment at Thr1120–Ala1147 is disordered.

The protein belongs to the ribonucleoside diphosphate reductase class-2 family. Adenosylcob(III)alamin is required as a cofactor.

It carries out the reaction a 2'-deoxyribonucleoside 5'-diphosphate + [thioredoxin]-disulfide + H2O = a ribonucleoside 5'-diphosphate + [thioredoxin]-dithiol. Its function is as follows. Catalyzes the reduction of ribonucleotides to deoxyribonucleotides. May function to provide a pool of deoxyribonucleotide precursors for DNA repair during oxygen limitation and/or for immediate growth after restoration of oxygen. The protein is Vitamin B12-dependent ribonucleotide reductase (nrdJ) of Agrobacterium fabrum (strain C58 / ATCC 33970) (Agrobacterium tumefaciens (strain C58)).